Here is a 716-residue protein sequence, read N- to C-terminus: Fatty acid oxidation complex subunit alpha (716 aa).

Residues 1–189 (MIYQSPTIQV…KVGAVDAVVA (189 aa)) form an enoyl-CoA hydratase/isomerase region. Residue Asp-296 participates in substrate binding. The tract at residues 311 to 716 (KDVKSAAVLG…AANNGSYYQA (406 aa)) is 3-hydroxyacyl-CoA dehydrogenase. NAD(+) is bound by residues Met-324, Asp-343, 400 to 402 (VVE), Lys-407, and Ser-429. His-450 serves as the catalytic For 3-hydroxyacyl-CoA dehydrogenase activity. NAD(+) is bound at residue Asn-453. Substrate is bound by residues Asn-500 and Tyr-660.

This sequence in the N-terminal section; belongs to the enoyl-CoA hydratase/isomerase family. In the C-terminal section; belongs to the 3-hydroxyacyl-CoA dehydrogenase family. As to quaternary structure, heterotetramer of two alpha chains (FadB) and two beta chains (FadA).

It catalyses the reaction a (3S)-3-hydroxyacyl-CoA + NAD(+) = a 3-oxoacyl-CoA + NADH + H(+). The enzyme catalyses a (3S)-3-hydroxyacyl-CoA = a (2E)-enoyl-CoA + H2O. The catalysed reaction is a 4-saturated-(3S)-3-hydroxyacyl-CoA = a (3E)-enoyl-CoA + H2O. It carries out the reaction (3S)-3-hydroxybutanoyl-CoA = (3R)-3-hydroxybutanoyl-CoA. It catalyses the reaction a (3Z)-enoyl-CoA = a 4-saturated (2E)-enoyl-CoA. The enzyme catalyses a (3E)-enoyl-CoA = a 4-saturated (2E)-enoyl-CoA. The protein operates within lipid metabolism; fatty acid beta-oxidation. Involved in the aerobic and anaerobic degradation of long-chain fatty acids via beta-oxidation cycle. Catalyzes the formation of 3-oxoacyl-CoA from enoyl-CoA via L-3-hydroxyacyl-CoA. It can also use D-3-hydroxyacyl-CoA and cis-3-enoyl-CoA as substrate. This chain is Fatty acid oxidation complex subunit alpha, found in Shewanella sp. (strain MR-7).